Reading from the N-terminus, the 312-residue chain is Protein phosphatase 2A catalytic subunit B (312 aa).

Mn(2+) is bound by residues aspartate 55, histidine 57, aspartate 83, and asparagine 115. The active-site Proton donor is the histidine 116. Residues histidine 165 and histidine 240 each contribute to the Mn(2+) site.

Belongs to the PPP phosphatase family. PP-2A subfamily. Component of the Sca1 complex composed of at least gefA, gefH, scaA, phr, and the protein phosphatase 2A subunits pppA and pho2B. Requires Mn(2+) as cofactor.

Its subcellular location is the cell membrane. The enzyme catalyses O-phospho-L-seryl-[protein] + H2O = L-seryl-[protein] + phosphate. The catalysed reaction is O-phospho-L-threonyl-[protein] + H2O = L-threonyl-[protein] + phosphate. Its function is as follows. Component of the Sca1 complex, a regulator of cell motility, chemotaxis and signal relay. The Sca1 complex is recruited to the plasma membrane in a chemoattractant- and F-actin-dependent manner and is enriched at the leading edge of chemotaxing cells where it regulates F-actin dynamics and signal relay by controlling the activation of rasC and the downstream target of rapamycin complex 2 (TORC2)-Akt/protein kinase B (PKB) pathway. The protein is Protein phosphatase 2A catalytic subunit B of Dictyostelium discoideum (Social amoeba).